The chain runs to 117 residues: UPF0342 protein Bcer98_0695 (117 aa).

It belongs to the UPF0342 family.

This is UPF0342 protein Bcer98_0695 from Bacillus cytotoxicus (strain DSM 22905 / CIP 110041 / 391-98 / NVH 391-98).